Reading from the N-terminus, the 730-residue chain is Sodium-dependent neutral amino acid transporter B(0)AT2 (730 aa).

Residues 1 to 24 are disordered; sequence MPKNSKVVKRELDDDVTESVKDLL. The Extracellular segment spans residues 1 to 70; it reads MPKNSKVVKR…RPAWSSKLQY (70 aa). Phosphoserine occurs at positions 25 and 55. 3 helical membrane passes run 71–91, 97–117, and 149–169; these read ILAQ…PYLC, GAYL…LFFL, and VVCY…LFYF. Over 170–223 the chain is Cytoplasmic; that stretch reads SQSFQQPLPWDQCPLVKNASHTFVEPECEQSSATTYYWYREALNISSSISESGG. A run of 2 helical transmembrane segments spans residues 224 to 244 and 253 to 273; these read LNWK…LAMI and IIYF…IRAL. A glycan (N-linked (GlcNAc...) asparagine) is linked at asparagine 276. Helical transmembrane passes span 302 to 322 and 335 to 355; these read AATQ…AFSS and VLVS…VFAV. Over 356–458 the chain is Cytoplasmic; that stretch reads LGFKANVINE…AMTHFPASPF (103 aa). 5 helical membrane-spanning segments follow: residues 459–479, 494–514, 530–550, 575–595, and 619–639; these read WSVM…FGTI, KEIL…IFVQ, TLPL…VYGI, YVSP…MGLS, and LVVC…VFIV. The Extracellular portion of the chain corresponds to 640 to 730; the sequence is RRFNLIDDSS…IMPDMPESDL (91 aa). 3 positions are modified to phosphoserine: serine 687, serine 699, and serine 701.

Belongs to the sodium:neurotransmitter symporter (SNF) (TC 2.A.22) family. SLC6A15 subfamily.

The protein resides in the membrane. It carries out the reaction L-leucine(in) + Na(+)(in) = L-leucine(out) + Na(+)(out). It catalyses the reaction L-isoleucine(in) + Na(+)(in) = L-isoleucine(out) + Na(+)(out). The catalysed reaction is L-methionine(in) + Na(+)(in) = L-methionine(out) + Na(+)(out). The enzyme catalyses L-proline(in) + Na(+)(in) = L-proline(out) + Na(+)(out). It carries out the reaction L-alanine(in) + Na(+)(in) = L-alanine(out) + Na(+)(out). It catalyses the reaction L-asparagine(in) + Na(+)(in) = L-asparagine(out) + Na(+)(out). The catalysed reaction is L-valine(in) + Na(+)(in) = L-valine(out) + Na(+)(out). The enzyme catalyses L-cysteine(in) + Na(+)(in) = L-cysteine(out) + Na(+)(out). It carries out the reaction L-glutamine(in) + Na(+)(in) = L-glutamine(out) + Na(+)(out). It catalyses the reaction L-serine(in) + Na(+)(in) = L-serine(out) + Na(+)(out). The catalysed reaction is L-threonine(in) + Na(+)(in) = L-threonine(out) + Na(+)(out). The enzyme catalyses L-pipecolate(in) + Na(+)(in) = L-pipecolate(out) + Na(+)(out). It carries out the reaction L-phenylalanine(in) + Na(+)(in) = L-phenylalanine(out) + Na(+)(out). In terms of biological role, functions as a sodium-dependent neutral amino acid transporter. Exhibits preference for the branched-chain amino acids, particularly leucine, valine and isoleucine and methionine. Can also transport low-affinity substrates such as alanine, phenylalanine, glutamine and pipecolic acid. Mediates the saturable, pH-sensitive and electrogenic cotransport of proline and sodium ions with a stoichiometry of 1:1. May have a role as transporter for neurotransmitter precursors into neurons. In contrast to other members of the neurotransmitter transporter family, does not appear to be chloride-dependent. This is Sodium-dependent neutral amino acid transporter B(0)AT2 (SLC6A15) from Pongo abelii (Sumatran orangutan).